Reading from the N-terminus, the 1107-residue chain is MAHLEQFGRVSRLSYSRIKEPVELPNLIQIQKNSYDWFLEHGLREALQEVFPISDFTGNLELGFLDYSMGEPKYSINECKERDVSYQAPLKLKVRLTDKENGEIKESEVYMGDLPLMTEKGTFIINGAERVVVSQLVKSPGVYFNERMDVAGHPLFGATIIPNRGAWFELEMDSAGLVYTRIDKTRKIPVTVLLRALGYESNEVILDMYDGDETIARTLEKDTSTNKKEALIEFYRRLRPGELATEDAAEQLLKNLFFDPRRYDMAAVGRYKVNKKLGLNIPPENRHLTLEDITATIGYLLKLIKGEGKTDVIDHLGNRRLRSIGELLQNQFRTGLVRMERVVRERMSIHDVETLTPQVLINIRPITAAVKEFFGSSQLSQFMDQTNPLAELTHKRRLSALGPGGLTRERAGFQVRDVHHSHYGRICPIETPEGPNIGLIGYLATFGQVNDFGFIETPYRKVDKKLGRVLNEIVYLSADEEDEYYVAQANAPLDENGYFIEEKVEARYFEEILEIPKNRVDYMDVSPKQVFSVATALIPFLENDDANRALMGANMQRQAVPLVKTEAPIVGTGLEHKAARDSGAVVIAKKAGTVKKASASRISIEKDDGTIDNYELLKFMRSNQGTCYNQRPIVKVGERVEANEVIADGPSTEQGELALGRNVMVAFMPWEGYNYEDAILISEKLVKDDVFTSIHIEEYECEARDTKLGSEEITRDIPNVSEDMLKNLDDQGVIRVGAEVRPDDILVGKVTPKGETELTPEERLLRAIFGEKAREVRDSSLRVPHGEAGKVVAVKRFSREKGDELPPGVNQLVRVYIAQKRKISEGDKMAGRHGNKGVISRILPEEDMPFLEDGTPVEIVLNPLGVPSRMNIGQILECHMGWAARALGLNIATPVFDGANEEDIFTKLREASLLESGKTILFDGRTGEKFKHEITVGYVYMLKLAHLVDDKIHARSIGPYSLVTQQPLGGKAQFGGQRFGEMEVWALEAYGSSYTLQEILTVKSDDVAGRLKTYESIVKGENIPEPGVPEGFKVLIKELQSLALDVRILAGDDHEILIKDNDNEGNEKEKARELGLDLPDNPVGRMLEITQPIENAEQDVELKSSPK.

Basic and acidic residues predominate over residues 1062–1075 (DNEGNEKEKARELG). The disordered stretch occupies residues 1062-1081 (DNEGNEKEKARELGLDLPDN).

This sequence belongs to the RNA polymerase beta chain family. The RNAP catalytic core consists of 2 alpha, 1 beta, 1 beta' and 1 omega subunit. When a sigma factor is associated with the core the holoenzyme is formed, which can initiate transcription.

It carries out the reaction RNA(n) + a ribonucleoside 5'-triphosphate = RNA(n+1) + diphosphate. DNA-dependent RNA polymerase catalyzes the transcription of DNA into RNA using the four ribonucleoside triphosphates as substrates. In Syntrophomonas wolfei subsp. wolfei (strain DSM 2245B / Goettingen), this protein is DNA-directed RNA polymerase subunit beta.